A 152-amino-acid polypeptide reads, in one-letter code: Small ribosomal subunit protein bS6 (152 aa).

The disordered stretch occupies residues 96–152 (HEEGPSAMLQKRDRDDRGPREGGDRGPRREFGDRPPRRDGDFQRGPRPDRAPREDRA).

The protein belongs to the bacterial ribosomal protein bS6 family.

Functionally, binds together with bS18 to 16S ribosomal RNA. This Rhizobium etli (strain ATCC 51251 / DSM 11541 / JCM 21823 / NBRC 15573 / CFN 42) protein is Small ribosomal subunit protein bS6.